A 453-amino-acid polypeptide reads, in one-letter code: Malate dehydrogenase [NADP], chloroplastic (453 aa).

Residues 1–68 (MAVVKLSPWA…RLSSPASIRC (68 aa)) constitute a chloroplast transit peptide. Cys88 and Cys93 are disulfide-bonded. 117–123 (GAAGMIS) provides a ligand contact to NADP(+). Substrate is bound by residues Arg198 and Arg204. NADP(+) is bound by residues Asn211, Gln218, and 235 to 237 (VGN). Substrate-binding residues include Asn237 and Arg268. The Proton acceptor role is filled by His293. An intrachain disulfide couples Cys429 to Cys441.

This sequence belongs to the LDH/MDH superfamily. MDH type 2 family. In terms of assembly, homodimer.

It localises to the plastid. The protein resides in the chloroplast. It carries out the reaction (S)-malate + NADP(+) = oxaloacetate + NADPH + H(+). Chloroplast NADP-MDH is activated upon illumination. In order to be enzymatically active, disulfide bridges on the protein must be reduced by thioredoxin which receives electrons from ferredoxin and the electron transport system of photosynthesis. In terms of biological role, the chloroplastic, NADP-dependent form is essential for the photosynthesis C4 cycle, which allows plants to circumvent the problem of photorespiration. In C4 plants, NADP-MDH activity acts to convert oxaloacetate to malate in chloroplasts of mesophyll cells for transport to the bundle sheath cells. This chain is Malate dehydrogenase [NADP], chloroplastic, found in Flaveria bidentis (Coastal plain yellowtops).